The following is a 211-amino-acid chain: NADH-quinone oxidoreductase subunit A (211 aa).

The next 3 helical transmembrane spans lie at tryptophan 7–proline 27, phenylalanine 61–tyrosine 81, and valine 88–isoleucine 108.

Belongs to the complex I subunit 3 family. As to quaternary structure, NDH-1 is composed of 14 different subunits. Subunits NuoA, H, J, K, L, M, N constitute the membrane sector of the complex.

The protein localises to the cell inner membrane. The enzyme catalyses a quinone + NADH + 5 H(+)(in) = a quinol + NAD(+) + 4 H(+)(out). NDH-1 shuttles electrons from NADH, via FMN and iron-sulfur (Fe-S) centers, to quinones in the respiratory chain. The immediate electron acceptor for the enzyme in this species is believed to be ubiquinone. Couples the redox reaction to proton translocation (for every two electrons transferred, four hydrogen ions are translocated across the cytoplasmic membrane), and thus conserves the redox energy in a proton gradient. This Psychrobacter sp. (strain PRwf-1) protein is NADH-quinone oxidoreductase subunit A.